The following is a 236-amino-acid chain: Probable transcriptional regulatory protein FP0835 (236 aa).

It belongs to the TACO1 family.

It localises to the cytoplasm. This Flavobacterium psychrophilum (strain ATCC 49511 / DSM 21280 / CIP 103535 / JIP02/86) protein is Probable transcriptional regulatory protein FP0835.